Consider the following 117-residue polypeptide: Small ribosomal subunit protein eS25 (117 aa).

The segment at 1–34 (MPPKKDPKGGKAPPSKKKEGSGGGKAKKKKWSKG) is disordered. Over residues 25 to 34 (KAKKKKWSKG) the composition is skewed to basic residues.

Belongs to the eukaryotic ribosomal protein eS25 family.

This Caenorhabditis elegans protein is Small ribosomal subunit protein eS25 (rps-25).